Consider the following 196-residue polypeptide: Spore maturation protein A (196 aa).

Transmembrane regions (helical) follow at residues Met1–Gly21, Ala37–Ile57, Ile133–Val153, and Thr163–Ile183.

The protein localises to the cell membrane. In terms of biological role, involved in spore core dehydration; might be involved in the transport of something into or out of the forespore or could be required for some modification of the cortex peptidoglycan structure. This chain is Spore maturation protein A (spmA), found in Bacillus subtilis (strain 168).